Reading from the N-terminus, the 294-residue chain is Putative ribose uptake protein RbsU (294 aa).

The next 10 helical transmembrane spans lie at 2–24, 34–56, 63–82, 92–114, 121–140, 150–172, 179–198, 218–235, 242–264, and 274–293; these read NAVNILIGLMPMIGWGIFPVIVG, ILGTTFGTLILAIVVAIFRGTPI, IFCLISGACWALAQIITFHV, MPITTGFQLVGASLWGVFVLGNW, LIGFTAIALIIIGVYLTAWS, GAVKGILLLLVGELGYLGYSAFP, GFQGFLPQAIGMTIVGIIFG, IFSGFFFAFAALTYLISA, LATGFVLSQTSVIFATIGGIYIL, and IAVMVGLLLVLVAGSVTAFI.

The protein belongs to the GRP transporter (TC 2.A.7.5) family.

Its subcellular location is the cell membrane. In terms of biological role, could be involved in the uptake of ribose. The protein is Putative ribose uptake protein RbsU (rbsU) of Latilactobacillus sakei subsp. sakei (strain 23K) (Lactobacillus sakei subsp. sakei).